A 179-amino-acid polypeptide reads, in one-letter code: Large ribosomal subunit protein uL5 (179 aa).

Belongs to the universal ribosomal protein uL5 family. Part of the 50S ribosomal subunit; part of the 5S rRNA/L5/L18/L25 subcomplex. Contacts the 5S rRNA and the P site tRNA. Forms a bridge to the 30S subunit in the 70S ribosome.

Its function is as follows. This is one of the proteins that bind and probably mediate the attachment of the 5S RNA into the large ribosomal subunit, where it forms part of the central protuberance. In the 70S ribosome it contacts protein S13 of the 30S subunit (bridge B1b), connecting the 2 subunits; this bridge is implicated in subunit movement. Contacts the P site tRNA; the 5S rRNA and some of its associated proteins might help stabilize positioning of ribosome-bound tRNAs. The chain is Large ribosomal subunit protein uL5 from Halalkalibacterium halodurans (strain ATCC BAA-125 / DSM 18197 / FERM 7344 / JCM 9153 / C-125) (Bacillus halodurans).